Reading from the N-terminus, the 457-residue chain is Peptidyl-prolyl cis-trans isomerase FKBP5 (457 aa).

Methionine 1 carries the post-translational modification N-acetylmethionine. A compositionally biased stretch (basic and acidic residues) spans 1–11 (MTTDEGAKNSR). Positions 1–27 (MTTDEGAKNSRENPTATVAEQGEDVTS) are disordered. Position 28 is an N6-acetyllysine (lysine 28). PPIase FKBP-type domains are found at residues 50–138 (GDKV…LDFK) and 165–251 (GARV…KSFE). TPR repeat units follow at residues 268-301 (AAIV…LEME), 317-350 (LAAF…DSAN), and 351-384 (EKGL…NPQN). The tract at residues 423–457 (EEANKAMSKKTSEGVTNEKLAVSHAVEEEKPEGHV) is disordered. Serine 445 is modified (phosphoserine). Residues 447-457 (AVEEEKPEGHV) are compositionally biased toward basic and acidic residues.

In terms of assembly, part of a heteromultimeric cytoplasmic complex with HSP90AA1, HSPA1A/HSPA1B and steroid receptors. Upon ligand binding dissociates from the complex and FKBP4 takes its place. Interacts with functionally mature heterooligomeric progesterone receptor complexes along with HSP90 and TEBP. Interacts with NR3C1. Interacts with Akt/AKT1 and PHLPP1; enhancing dephosphorylation and subsequent activation of Akt/AKT1. Interacts with IFI44L; this interaction modulates the kinase activity of IKBKB and IKBKE. Interacts with IKBKB and IKBKE. Post-translationally, acetylation impairs ability to promote interaction between Akt/AKT1 and PHLPP1. Deacetylation by SIRT7 promotes interaction between Akt/AKT1 and PHLPP1, leading to suppress Akt/AKT1 activation. Ubiquitinated, leading to degradation in a proteasome-dependent manner. Deubiquitinated by USP49, leading to stabilization.

The protein localises to the cytoplasm. Its subcellular location is the nucleus. It carries out the reaction [protein]-peptidylproline (omega=180) = [protein]-peptidylproline (omega=0). With respect to regulation, inhibited by both FK506 and rapamycin. Immunophilin protein with PPIase and co-chaperone activities. Component of unligated steroid receptors heterocomplexes through interaction with heat-shock protein 90 (HSP90). Plays a role in the intracellular trafficking of heterooligomeric forms of steroid hormone receptors maintaining the complex into the cytoplasm when unliganded. Acts as a regulator of Akt/AKT1 activity by promoting the interaction between Akt/AKT1 and PHLPP1, thereby enhancing dephosphorylation and subsequent activation of Akt/AKT1. Interacts with IKBKE and IKBKB which facilitates IKK complex assembly leading to increased IKBKE and IKBKB kinase activity, NF-kappaB activation, and IFN production. The chain is Peptidyl-prolyl cis-trans isomerase FKBP5 (FKBP5) from Aotus nancymaae (Ma's night monkey).